A 230-amino-acid polypeptide reads, in one-letter code: Orotidine 5'-phosphate decarboxylase (230 aa).

Substrate is bound by residues Asp8, Lys30, 59–68 (DLKLYDIPNT), Thr118, Arg178, Gln187, Gly207, and Arg208. Lys61 (proton donor) is an active-site residue.

The protein belongs to the OMP decarboxylase family. Type 1 subfamily. As to quaternary structure, homodimer.

It catalyses the reaction orotidine 5'-phosphate + H(+) = UMP + CO2. It participates in pyrimidine metabolism; UMP biosynthesis via de novo pathway; UMP from orotate: step 2/2. Catalyzes the decarboxylation of orotidine 5'-monophosphate (OMP) to uridine 5'-monophosphate (UMP). This is Orotidine 5'-phosphate decarboxylase from Sulfurovum sp. (strain NBC37-1).